Reading from the N-terminus, the 302-residue chain is MDNPTTPIAVVGPTASGKSALGVSLAHHLNGEVVNVDSMQLYKGMDIGTAKLTLEEREGIVHHLLDVWDISETASVARYQSQAIAVVEDIQRRGKTPILVGGSMLYVQSLVDDWQFPPTDPSVRAKWESKLNEVGVEALHALLAQKDPQAASIIELKDPRRTVRALEVIELTGKPFNASQPPKNAPPRWNTQIIGLGTNTEWLNPRIDLRTELMFEKGFVHEVENLVGKGLIADSTAGHAIGYAQVLQHFAGELSVDEMIEHTKIGTRRYVRRQRSWFKRDPRIHWIDASGDTFSMALSLLS.

12–19 provides a ligand contact to ATP; that stretch reads GPTASGKS. 14-19 serves as a coordination point for substrate; that stretch reads TASGKS. The interval 37-40 is interaction with substrate tRNA; sequence DSMQ.

Belongs to the IPP transferase family. In terms of assembly, monomer. The cofactor is Mg(2+).

It catalyses the reaction adenosine(37) in tRNA + dimethylallyl diphosphate = N(6)-dimethylallyladenosine(37) in tRNA + diphosphate. In terms of biological role, catalyzes the transfer of a dimethylallyl group onto the adenine at position 37 in tRNAs that read codons beginning with uridine, leading to the formation of N6-(dimethylallyl)adenosine (i(6)A). The chain is tRNA dimethylallyltransferase from Corynebacterium diphtheriae (strain ATCC 700971 / NCTC 13129 / Biotype gravis).